The chain runs to 200 residues: Isochorismatase family protein 2A (200 aa).

It belongs to the isochorismatase family.

The protein is Isochorismatase family protein 2A of Dictyostelium discoideum (Social amoeba).